Here is a 134-residue protein sequence, read N- to C-terminus: Profilin (134 aa).

Belongs to the profilin family. Occurs in many kinds of cells as a complex with monomeric actin in a 1:1 ratio.

It is found in the cytoplasm. The protein localises to the cytoskeleton. In terms of biological role, binds to actin and affects the structure of the cytoskeleton. At high concentrations, profilin prevents the polymerization of actin, whereas it enhances it at low concentrations. By binding to PIP2, it inhibits the formation of IP3 and DG. This chain is Profilin, found in Brassica napus (Rape).